The sequence spans 151 residues: Immunity protein YezG (151 aa).

The stretch at 62-90 (KDIFKTLLRELRELFEELRTEHRNNNDDV) forms a coiled coil.

As to quaternary structure, interacts with cognate toxin YeeF but not with non-cognate toxin YobL. The interaction probably inhibits the toxic activity of YeeF. May bind with a stoichiometry of 2:2 to YeeF.

The protein resides in the cytoplasm. Its function is as follows. Immunity component of one of 6 LXG toxin-immunity modules in this strain. They promote kin selection, mediate competition in biofilms, and drive spatial segregation of different strains, indicating that LXG toxins may help avoid warfare between strains in biofilms. Mediates intercellular competition during biofilm formation; disruption of the operon disadvantages the bacteria, but overexpression of the cognate immunity protein restores growth in competition with wild-type. In situ neutralizes the toxic effect of cognate toxin YeeF. Probably neutralizes the ability to inhibit growth of cognate toxin YeeF. Probably does not have immunity protein activity on other LXG toxins. In Bacillus subtilis (strain 168), this protein is Immunity protein YezG (yezG).